The following is a 272-amino-acid chain: MAVLLRTTTSATTATSGGSSSATALLATTFRRGGRRLLLLPATRGSAPRRAALLTARASAEPLEVCAKASLTVPDRLGDCPFTQRVLLTIEEKHLPYDIKLVDLANKPDWFLKISPEGKVPIVKLEEQWVADSDVITQAIEEKYPEPSLATPPEKASVGSKIFSTFIGFLKSKDPNDGTEQALLSELTSFDSYLKDNGPFINGETISAADLSLAPKLYHMEIALGHYKNWSVPDSLSHVKKYMKTIFSMDSFVKTIALQEDVIAGWRPKVMG.

The N-terminal 57 residues, 1-57 (MAVLLRTTTSATTATSGGSSSATALLATTFRRGGRRLLLLPATRGSAPRRAALLTAR), are a transit peptide targeting the chloroplast. The glutathione site is built by Lys68 and Asp79. L-ascorbate is bound by residues Lys68 and Asp79. Residues 70–148 (SLTVPDRLGD…AIEEKYPEPS (79 aa)) form the GST N-terminal domain. Cys80 (nucleophile) is an active-site residue. Positions 107, 120, 133, 219, and 266 each coordinate glutathione. The GST C-terminal domain occupies 126 to 272 (EEQWVADSDV…IAGWRPKVMG (147 aa)). Position 269 (Lys269) interacts with L-ascorbate.

This sequence belongs to the GST superfamily. DHAR family. Monomer.

The protein localises to the plastid. Its subcellular location is the chloroplast. It carries out the reaction RX + glutathione = an S-substituted glutathione + a halide anion + H(+). The enzyme catalyses L-dehydroascorbate + 2 glutathione = glutathione disulfide + L-ascorbate. Functionally, involved in ascorbate homeostasis. Maintains redox pools of ascorbate by recycling dihydroascorbate (DHA) to ascorbate. Involved in scavenging reactive oxygen species (ROS) under oxidative stresses. The polypeptide is Probable glutathione S-transferase DHAR2, chloroplastic (Oryza sativa subsp. japonica (Rice)).